We begin with the raw amino-acid sequence, 294 residues long: Probable 2-(5''-triphosphoribosyl)-3'-dephosphocoenzyme-A synthase (294 aa).

This sequence belongs to the CitG/MdcB family.

It catalyses the reaction 3'-dephospho-CoA + ATP = 2'-(5''-triphospho-alpha-D-ribosyl)-3'-dephospho-CoA + adenine. This Streptococcus pyogenes serotype M5 (strain Manfredo) protein is Probable 2-(5''-triphosphoribosyl)-3'-dephosphocoenzyme-A synthase.